The primary structure comprises 29 residues: Cytochrome b6-f complex subunit 8 (29 aa).

The helical transmembrane segment at 3–23 (IVDIAWAALMVVFTFSLSLVV) threads the bilayer.

Belongs to the PetN family. In terms of assembly, the 4 large subunits of the cytochrome b6-f complex are cytochrome b6, subunit IV (17 kDa polypeptide, PetD), cytochrome f and the Rieske protein, while the 4 small subunits are PetG, PetL, PetM and PetN. The complex functions as a dimer.

It is found in the plastid. Its subcellular location is the chloroplast thylakoid membrane. Functionally, component of the cytochrome b6-f complex, which mediates electron transfer between photosystem II (PSII) and photosystem I (PSI), cyclic electron flow around PSI, and state transitions. The sequence is that of Cytochrome b6-f complex subunit 8 from Gnetum parvifolium (Small-leaved jointfir).